A 1083-amino-acid polypeptide reads, in one-letter code: Ubiquitin-protein ligase E3C (1083 aa).

2 stretches are compositionally biased toward basic and acidic residues: residues 1–10 and 20–40; these read MFSFEGDFKT and SRKE…RKRE. The tract at residues 1–40 is disordered; the sequence is MFSFEGDFKTRPKVSLGGASRKEEKASLLHRTQEERRKRE. Residues 1–60 are cis-determinant of acceptor ubiquitin-binding; sequence MFSFEGDFKTRPKVSLGGASRKEEKASLLHRTQEERRKREEERRRLKNAVIIQSFIRGYR. Residues 45 to 74 form the IQ domain; it reads RLKNAVIIQSFIRGYRDRKQQYFIQRSAFD. The disordered stretch occupies residues 354–386; sequence ASPTGTGCPDSTSDSEDDNEETDQPNSPEDGRV. Positions 366 to 376 are enriched in acidic residues; the sequence is SDSEDDNEETD. Positions 744–1083 constitute an HECT domain; the sequence is NEPDLKKRIR…IECAAGFELS (340 aa). A Glycyl lysine isopeptide (Lys-Gly) (interchain with G-Cter in ubiquitin); by autocatalysis cross-link involves residue Lys903. Catalysis depends on Cys1051, which acts as the Glycyl thioester intermediate.

Belongs to the UBE3C family. In terms of assembly, interacts with 26S proteasomes. Interacts (via the HECT domain) with UBE2D1 and, less efficiently, with UBE2L3. In terms of processing, autoubiquitinated; promoting its own degradation.

The enzyme catalyses S-ubiquitinyl-[E2 ubiquitin-conjugating enzyme]-L-cysteine + [acceptor protein]-L-lysine = [E2 ubiquitin-conjugating enzyme]-L-cysteine + N(6)-ubiquitinyl-[acceptor protein]-L-lysine.. The protein operates within protein modification; protein ubiquitination. Functionally, E3 ubiquitin-protein ligase that specifically catalyzes 'Lys-29'- and 'Lys-48'-linked polyubiquitin chains. Accepts ubiquitin from the E2 ubiquitin-conjugating enzyme UBE2D1 in the form of a thioester and then directly transfers the ubiquitin to targeted substrates. Associates with the proteasome and promotes elongation of ubiquitin chains on substrates bound to the 26S proteasome. Also catalyzes 'Lys-29'- and 'Lys-48'-linked ubiquitination of 26S proteasome subunit ADRM1/RPN13 in response to proteotoxic stress, impairing the ability of the proteasome to bind and degrade ubiquitin-conjugated proteins. Acts as a negative regulator of autophagy by mediating 'Lys-29'- and 'Lys-48'-linked ubiquitination of PIK3C3/VPS34, promoting its degradation. Can assemble unanchored poly-ubiquitin chains in either 'Lys-29'- or 'Lys-48'-linked polyubiquitin chains; with some preference for 'Lys-48' linkages. Acts as a negative regulator of type I interferon by mediating 'Lys-48'-linked ubiquitination of IRF3 and IRF7, leading to their degradation by the proteasome. Catalyzes ubiquitination and degradation of CAND2. This chain is Ubiquitin-protein ligase E3C, found in Mus musculus (Mouse).